The following is a 255-amino-acid chain: MYIEVTGYGPALVLIHGWAMHSGVFAPLVEQLRPHHTLYLVDLPGHGYNHTTPTPLALPQVVHAIAAATPPAVWLGWSLGGLFALHAAATLPQVRGLIMLAATPCFVRREDWPHAVEVSIFTQFAQDLKQNYTETINRFLALDTLGSTHAQSELRQLRKILNARHTPNTATLQAGLELLAHTDLRRAVIDLTPPSLWIAGQRDRLVPAASIQAATALAPSGQTELLTITGGGHAPFLSHANQMTAALQHFIATLP.

Substrate-binding positions include W18, 78–79 (SL), and 139–143 (FLALD). The Nucleophile role is filled by S78. Active-site residues include D203 and H233. H233 provides a ligand contact to substrate.

It belongs to the AB hydrolase superfamily. Carboxylesterase BioH family. As to quaternary structure, monomer.

The protein resides in the cytoplasm. It catalyses the reaction 6-carboxyhexanoyl-[ACP] methyl ester + H2O = 6-carboxyhexanoyl-[ACP] + methanol + H(+). It participates in cofactor biosynthesis; biotin biosynthesis. In terms of biological role, the physiological role of BioH is to remove the methyl group introduced by BioC when the pimeloyl moiety is complete. It allows to synthesize pimeloyl-ACP via the fatty acid synthetic pathway through the hydrolysis of the ester bonds of pimeloyl-ACP esters. The protein is Pimeloyl-[acyl-carrier protein] methyl ester esterase of Xylella fastidiosa (strain M12).